Here is a 206-residue protein sequence, read N- to C-terminus: Small ribosomal subunit protein uS4 (206 aa).

The 61-residue stretch at 96-156 folds into the S4 RNA-binding domain; that stretch reads GRLDNVVYRM…EKSKKQARIK (61 aa).

Belongs to the universal ribosomal protein uS4 family. In terms of assembly, part of the 30S ribosomal subunit. Contacts protein S5. The interaction surface between S4 and S5 is involved in control of translational fidelity.

One of the primary rRNA binding proteins, it binds directly to 16S rRNA where it nucleates assembly of the body of the 30S subunit. Functionally, with S5 and S12 plays an important role in translational accuracy. This chain is Small ribosomal subunit protein uS4, found in Histophilus somni (strain 129Pt) (Haemophilus somnus).